Here is a 200-residue protein sequence, read N- to C-terminus: Holliday junction branch migration complex subunit RuvA (200 aa).

The segment at 1 to 63 (MYAYVKGKLT…EDAQLLYGFS (63 aa)) is domain I. The tract at residues 64–142 (SEEEKDMFLS…ITEEDSDSLL (79 aa)) is domain II. The tract at residues 143–149 (QVDATST) is flexible linker. The interval 150–200 (VQDQFVQEAMLALEALGYSKRELAKVEKTLNKNKYDSVDEAVKAGLQLVVS) is domain III.

It belongs to the RuvA family. In terms of assembly, homotetramer. Forms an RuvA(8)-RuvB(12)-Holliday junction (HJ) complex. HJ DNA is sandwiched between 2 RuvA tetramers; dsDNA enters through RuvA and exits via RuvB. An RuvB hexamer assembles on each DNA strand where it exits the tetramer. Each RuvB hexamer is contacted by two RuvA subunits (via domain III) on 2 adjacent RuvB subunits; this complex drives branch migration. In the full resolvosome a probable DNA-RuvA(4)-RuvB(12)-RuvC(2) complex forms which resolves the HJ.

Its subcellular location is the cytoplasm. The RuvA-RuvB-RuvC complex processes Holliday junction (HJ) DNA during genetic recombination and DNA repair, while the RuvA-RuvB complex plays an important role in the rescue of blocked DNA replication forks via replication fork reversal (RFR). RuvA specifically binds to HJ cruciform DNA, conferring on it an open structure. The RuvB hexamer acts as an ATP-dependent pump, pulling dsDNA into and through the RuvAB complex. HJ branch migration allows RuvC to scan DNA until it finds its consensus sequence, where it cleaves and resolves the cruciform DNA. In Staphylococcus aureus (strain Mu3 / ATCC 700698), this protein is Holliday junction branch migration complex subunit RuvA.